The primary structure comprises 540 residues: Cobalt-factor III methyltransferase (540 aa).

Residues cysteine 402, cysteine 405, cysteine 439, and cysteine 443 each contribute to the [4Fe-4S] cluster site.

It in the N-terminal section; belongs to the precorrin methyltransferase family. The cofactor is [4Fe-4S] cluster.

The enzyme catalyses Co(II)-factor III + AH2 + S-adenosyl-L-methionine = Co-precorrin-4 + A + S-adenosyl-L-homocysteine. Its pathway is cofactor biosynthesis; adenosylcobalamin biosynthesis. Methyltransferase that catalyzes the reduction, ring contraction and methylation of C-17 in cobalt-factor III to form cobalt-precorrin-4. Is also able to convert cobalt-precorrin-3 to cobalt-precorrin-4. The protein is Cobalt-factor III methyltransferase (cbiH60) of Priestia megaterium (Bacillus megaterium).